The chain runs to 90 residues: High mobility group nucleosome-binding domain-containing protein 4 (90 aa).

The interval 1 to 90 (MPKRKAKGDA…QKAEGTGDAK (90 aa)) is disordered. The span at 7–23 (KGDAKGDKGKVKDEPQR) shows a compositional bias: basic and acidic residues. At Ser-29 the chain carries ADP-ribosylserine. The span at 37-64 (PEPRPKKAPAKKGEKLAKGRKGKAEVSK) shows a compositional bias: basic and acidic residues. A compositionally biased stretch (polar residues) spans 65 to 83 (DGNNPAKNRDASTVQSQKA). Ser-80 bears the Phosphoserine mark. An N6-acetyllysine modification is found at Lys-82.

It belongs to the HMGN family.

Its subcellular location is the nucleus. This chain is High mobility group nucleosome-binding domain-containing protein 4 (HMGN4), found in Bos taurus (Bovine).